We begin with the raw amino-acid sequence, 350 residues long: tRNA uridine(34) hydroxylase (350 aa).

Residues 146–240 (DDPEAVFVDM…YARRAREQGL (95 aa)) enclose the Rhodanese domain. C200 acts as the Cysteine persulfide intermediate in catalysis.

It belongs to the TrhO family.

It catalyses the reaction uridine(34) in tRNA + AH2 + O2 = 5-hydroxyuridine(34) in tRNA + A + H2O. Functionally, catalyzes oxygen-dependent 5-hydroxyuridine (ho5U) modification at position 34 in tRNAs. The polypeptide is tRNA uridine(34) hydroxylase (Erwinia tasmaniensis (strain DSM 17950 / CFBP 7177 / CIP 109463 / NCPPB 4357 / Et1/99)).